Reading from the N-terminus, the 223-residue chain is Ribose-5-phosphate isomerase A (223 aa).

Substrate-binding positions include 28-31, 81-84, and 94-97; these read TGTT, DSAD, and KGGG. Glu103 functions as the Proton acceptor in the catalytic mechanism. A substrate-binding site is contributed by Lys121.

It belongs to the ribose 5-phosphate isomerase family. As to quaternary structure, homodimer.

It carries out the reaction aldehydo-D-ribose 5-phosphate = D-ribulose 5-phosphate. Its pathway is carbohydrate degradation; pentose phosphate pathway; D-ribose 5-phosphate from D-ribulose 5-phosphate (non-oxidative stage): step 1/1. Its function is as follows. Catalyzes the reversible conversion of ribose-5-phosphate to ribulose 5-phosphate. The polypeptide is Ribose-5-phosphate isomerase A (Buchnera aphidicola subsp. Acyrthosiphon pisum (strain 5A)).